The chain runs to 196 residues: Protein GrpE (196 aa).

A disordered region spans residues 1-40 (MSSKEQKTPEGQAPEEIIMDQHEEVEAVEPNDSAEQVDPR).

This sequence belongs to the GrpE family. As to quaternary structure, homodimer.

It is found in the cytoplasm. Participates actively in the response to hyperosmotic and heat shock by preventing the aggregation of stress-denatured proteins, in association with DnaK and GrpE. It is the nucleotide exchange factor for DnaK and may function as a thermosensor. Unfolded proteins bind initially to DnaJ; upon interaction with the DnaJ-bound protein, DnaK hydrolyzes its bound ATP, resulting in the formation of a stable complex. GrpE releases ADP from DnaK; ATP binding to DnaK triggers the release of the substrate protein, thus completing the reaction cycle. Several rounds of ATP-dependent interactions between DnaJ, DnaK and GrpE are required for fully efficient folding. The polypeptide is Protein GrpE (Salmonella gallinarum (strain 287/91 / NCTC 13346)).